The sequence spans 414 residues: Secernin-1 (414 aa).

It belongs to the peptidase C69 family. Secernin subfamily.

It localises to the cytoplasm. Regulates exocytosis in mast cells. Increases both the extent of secretion and the sensitivity of mast cells to stimulation with calcium. This is Secernin-1 (Scrn1) from Rattus norvegicus (Rat).